Consider the following 499-residue polypeptide: Lipopolysaccharide core galacturonosyltransferase RgtA (499 aa).

Transmembrane regions (helical) follow at residues 11–31 (TAGLLLAAYFVLNIVLRIVLP), 74–94 (IGALIVPKNILLFLSYLFYGL), 103–123 (EALAAVGMLALITLPQVSYMA), 125–145 (QDLTHTTALLFASSLFLYGFF), 165–185 (IGLISKYNFALMPVVALIAIL), 199–219 (MLAAITVALVIVLPHAVWLQG), 248–268 (LLAFLVAIIAFAALPVVIFAA), 291–311 (MMLASLAGIALIVLFTGSTTV), 316–336 (LDPFLLVLPIYFLAKMQAAGL), and 351–371 (VLMACVLIALGFRVVGAGLIG).

The protein belongs to the glycosyltransferase 83 family.

It localises to the cell inner membrane. It participates in bacterial outer membrane biogenesis; LPS core biosynthesis. In terms of biological role, involved in the modification of the lipopolysaccharide (LPS) inner core. Catalyzes the transfer of a galacturonic acid (GalA) residue to the 4-position of the outer Kdo (3-deoxy-D-manno-octulosonic acid) residue of the LPS inner core, using dodecaprenyl phosphate-GalA as the donor substrate. GalA addition by RgtA is required for RgtB activity. This is Lipopolysaccharide core galacturonosyltransferase RgtA from Rhizobium johnstonii (strain DSM 114642 / LMG 32736 / 3841) (Rhizobium leguminosarum bv. viciae).